The sequence spans 631 residues: Transmembrane and coiled-coil domain-containing protein 4 (631 aa).

The tract at residues 1–26 (MATWNRPHPRLPVAPEPVAEGESQQP) is disordered. Residues 153–183 (EEVFLESLKDAKEEESETAEESRKRKEKRRK) adopt a coiled-coil conformation. A run of 4 helical transmembrane segments spans residues 187-203 (YLLI…VIGV), 204-220 (TGGL…ATII), 228-248 (LGSV…GAGL), and 343-363 (LSGI…ANVI). A disordered region spans residues 523-631 (WSEKGLPLAP…ETQESCAELD (109 aa)). The segment covering 571–590 (IPSSASQAQVPAGLDQSTED) has biased composition (polar residues).

The protein belongs to the TMCO4 family.

It is found in the membrane. The chain is Transmembrane and coiled-coil domain-containing protein 4 (Tmco4) from Rattus norvegicus (Rat).